A 239-amino-acid chain; its full sequence is Ribonuclease PH (239 aa).

Residues arginine 88 and 126-128 contribute to the phosphate site; that span reads GTR.

This sequence belongs to the RNase PH family. In terms of assembly, homohexameric ring arranged as a trimer of dimers.

The catalysed reaction is tRNA(n+1) + phosphate = tRNA(n) + a ribonucleoside 5'-diphosphate. Phosphorolytic 3'-5' exoribonuclease that plays an important role in tRNA 3'-end maturation. Removes nucleotide residues following the 3'-CCA terminus of tRNAs; can also add nucleotides to the ends of RNA molecules by using nucleoside diphosphates as substrates, but this may not be physiologically important. Probably plays a role in initiation of 16S rRNA degradation (leading to ribosome degradation) during starvation. This chain is Ribonuclease PH, found in Coxiella burnetii (strain Dugway 5J108-111).